Consider the following 69-residue polypeptide: Lantibiotic lichenicidin A2 (69 aa).

A propeptide spanning residues 1–37 (MKNSAAREAFKGANHPAGMVSEEELKALVGGNDVNPE) is cleaved from the precursor. T38 is subject to 2-oxobutanoic acid. (Z)-2,3-didehydrobutyrine is present on residues T39, T42, and T43. A cross-link (lanthionine (Ser-Cys)) is located at residues 44 to 48 (SSWTC). S45 is modified (2,3-didehydroalanine (Ser)). A (Z)-2,3-didehydrobutyrine mark is found at T50 and T54. Residues 56–60 (SASLC) constitute a cross-link (lanthionine (Ser-Cys)). 2 consecutive cross-links (beta-methyllanthionine (Thr-Cys)) follow at residues 62–65 (TTKC) and 66–69 (TSRC). A (Z)-2,3-didehydrobutyrine modification is found at T63.

Maturation of lantibiotics involves the enzymatic conversion of Thr, and Ser into dehydrated AA and the formation of thioether bonds with cysteine. This is followed by membrane translocation and cleavage of the modified precursor.

It is found in the secreted. It localises to the cell wall. Lanthionine-containing peptide antibiotic (lantibiotic) active on Gram-positive bacteria. The bactericidal activity of lantibiotics is based on depolarization of energized bacterial cytoplasmic membranes, initiated by the formation of aqueous transmembrane pores. When present individually, LchA2 exhibits activity towards L.lactis HP. When combined with LchA1, it displays activity towards a broad spectrum of non-pathogenic and pathogenic Gram-positive bacteria including strains of L.monocytogenes, methicillin-resistant S.aureus, S.pneumoniae and strains of vancomycin-resistant enterococci, but not towards E.faecium L4001 and BM4147-1. Combined LchA1 and LchA2 peptides also inhibit Bacillus sp. HIL-Y85/54728, L.lactis DPC3417 and B.halodurans C-125, which produce lantibiotics themselves. Inactivated by proteinase K and pronase E, but not by trypsin and chymotrypsin. In Bacillus licheniformis (strain ATCC 14580 / DSM 13 / JCM 2505 / CCUG 7422 / NBRC 12200 / NCIMB 9375 / NCTC 10341 / NRRL NRS-1264 / Gibson 46), this protein is Lantibiotic lichenicidin A2.